A 932-amino-acid polypeptide reads, in one-letter code: Myelin gene regulatory factor-like A (932 aa).

2 stretches are compositionally biased toward low complexity: residues 1–19 (MDGY…QQHQ) and 33–48 (QQQQ…QQQQ). 7 disordered regions span residues 1-63 (MDGY…ISNG), 152-256 (VNSP…LSSS), 269-328 (TNTQ…NENP), 540-568 (VTPP…SNNM), 582-601 (TMNI…LSQL), 613-660 (TQNH…NNNN), and 680-726 (NINN…CHWN). The segment covering 49 to 59 (PMNGSNNQLLG) has biased composition (polar residues). The stretch at 127-154 (LDSSFLMLQQQLQDQQQQIAQFNSSVNS) forms a coiled coil. Composition is skewed to low complexity over residues 152-249 (VNSP…ANNT) and 277-294 (PRSI…TNSP). The segment at residues 286–546 (PNLSPTNSPI…ATQVTPPGDL (261 aa)) is a DNA-binding region (NDT80). The span at 311–328 (ENENSDPPSPMTQYNENP) shows a compositional bias: polar residues. 2 stretches are compositionally biased toward low complexity: residues 615–660 (NHNN…NNNN) and 680–721 (NINN…NNNN). Residues 767-877 (SDLRIKYDLK…KQMDEMKLKL (111 aa)) form the Peptidase S74 domain. A coiled-coil region spans residues 863 to 895 (TQELSKQMDEMKLKLITYESKLKNLKKKSKNQT). Residues 895–915 (TILLIIFMITFLLVALYMYKP) traverse the membrane as a helical segment.

Its subcellular location is the membrane. Functionally, transcription factor which acts as a key regulator of pstA (prestalk-A) cells differentiation. Essential for ecmA-specific gene expression. The polypeptide is Myelin gene regulatory factor-like A (mrfA) (Dictyostelium discoideum (Social amoeba)).